Here is an 876-residue protein sequence, read N- to C-terminus: MEIASKYNPEEVESKWYNYWMEYGCFISVPDGRKPYTVVIPPPNVTGVLHMGHMLNNTIQDILVRRARMKGYNACWVPGTDHASIATEAKVVGRLAAQGISKQDLGREEFLRHAWDWTHEHGGIILEQLKRLGASCDWTRTAFTMDESRSESVIKVFVDLYNKGLIYRGIRVVNWDPKALTALSDEEVIYKETNGKLYYLRYFVENEPDKYIIVATTRPETIMGDTAVCVNPNDERYRWLRGKRVIVPTVGRAVPIIEDEYVDMEFGTGCLKVTPAHDVNDYMLGQKHRLESIDIFHDNGILNEHGGPYAGMDRFDVRKKIEQDLIDAGLMERVENYVNKVGYSERTDVPIEPKLSMQWFLQMESLAKSALDAVMNDEIKLHPAKFKNTYRHWMENVKDWCISRQLWWGHRIPAYYLPDGSIVVAETAEKAVELARKQTGSDSLTAEDLRQDSDSLDTWFSSWLWPISVFGDVMDPENEELDYYYPTSDLVTAPDILFFWVARMIMAGYEYRGKKPFDNVYLTGIVRDGQGRKMSKSLGNSPDPIMLMEKYGADGVRMGLMMAAPAGNDVLFDESLSEQGRNFCNKIWNAFRLVKGWQQAETATQPEASALAVKWFGYRLDEVKTELDDLFSKYRLSEALTLVYKLFWDDFSSWYLEMVKPAYGQPMDAKTYGSTIGFFDQLLRLLHPFMPFITEELWHALASRHDGETIMLCLLPDAHETDRDFLQAFDRTREIIAAIRNIRTGKNVPFKEKLTLEAGNEHDASFDAVIIKMGNLEAINRVEEKTSGSTSFLIGTLEYAIPMGALIDVEEEIKKLSDELAYQEKFLASVMKKLGNESFVAKAPQAVIELEQKKKSDAEARIATLRDSLNQLQSTK.

The 'HIGH' region signature appears at 43–53 (PNVTGVLHMGH). A 'KMSKS' region motif is present at residues 533–537 (KMSKS). Lys536 provides a ligand contact to ATP. The stretch at 804–876 (GALIDVEEEI…DSLNQLQSTK (73 aa)) forms a coiled coil.

Belongs to the class-I aminoacyl-tRNA synthetase family. ValS type 1 subfamily. Monomer.

It localises to the cytoplasm. It carries out the reaction tRNA(Val) + L-valine + ATP = L-valyl-tRNA(Val) + AMP + diphosphate. In terms of biological role, catalyzes the attachment of valine to tRNA(Val). As ValRS can inadvertently accommodate and process structurally similar amino acids such as threonine, to avoid such errors, it has a 'posttransfer' editing activity that hydrolyzes mischarged Thr-tRNA(Val) in a tRNA-dependent manner. The protein is Valine--tRNA ligase of Porphyromonas gingivalis (strain ATCC 33277 / DSM 20709 / CIP 103683 / JCM 12257 / NCTC 11834 / 2561).